The primary structure comprises 156 residues: Small ribosomal subunit protein uS7 (156 aa).

This sequence belongs to the universal ribosomal protein uS7 family. As to quaternary structure, part of the 30S ribosomal subunit. Contacts proteins S9 and S11.

One of the primary rRNA binding proteins, it binds directly to 16S rRNA where it nucleates assembly of the head domain of the 30S subunit. Is located at the subunit interface close to the decoding center, probably blocks exit of the E-site tRNA. This Clostridium tetani (strain Massachusetts / E88) protein is Small ribosomal subunit protein uS7.